Here is a 90-residue protein sequence, read N- to C-terminus: ATP synthase subunit e, mitochondrial (90 aa).

Serine 2 is modified (N-acetylserine). Residues 7 to 23 (VLRWSALGAGVVYGFVH) traverse the membrane as a helical segment.

As to quaternary structure, F-type ATP synthases have 2 components, the catalytic core F(1) and the membrane-embedded component F(0), linked together by a central stalk and a peripheral stalk. The central stalk, also called rotor shaft, is often seen as part of F(1). The peripheral stalk is seen as part of F(0). F(0) contains the membrane channel next to the rotor. F-type ATP synthases form dimers but each monomer functions independently in ATP generation. The dimer consists of 17 different polypeptides: ATP1 (subunit alpha, 3 molecules per monomer, part of F(1)), ATP2 (subunit beta, 3 copies per monomer, part of F(1)), ATP3 (subunit gamma, part of the central stalk), ATP4 (subunit b, part of the peripheral stalk), ATP5/OSCP (subunit 5/OSCP, part of the peripheral stalk), ATP6 (subunit a, part of the peripheral stalk), ATP7 (subunit d, part of the peripheral stalk), ATP8 (subunit 8, part of the peripheral stalk), OLI1 (subunit c, part of the rotor, 10 molecules per monomer), ATP14 (subunit h, part of the peripheral stalk), ATP15 (subunit epsilon, part of the central stalk), ATP16 (subunit delta, part of the central stalk), ATP17 (subunit f, part of the peripheral stalk), ATP18 (subunit i/j, part of the peripheral stalk), ATP19 (subunit k, dimer-specific, at interface between monomers), ATP20 (subunit g, at interface between monomers), TIM11 (subunit e, at interface between monomers).

It is found in the mitochondrion inner membrane. Mitochondrial membrane ATP synthase (F(1)F(0) ATP synthase or Complex V) produces ATP from ADP in the presence of a proton gradient across the membrane which is generated by electron transport complexes of the respiratory chain. F-type ATP synthases consist of two structural domains, F(1) - containing the extramembraneous catalytic core, and F(0) - containing the membrane proton channel, linked together by a central stalk and a peripheral stalk. During catalysis, ATP synthesis in the catalytic domain of F(1) is coupled via a rotary mechanism of the central stalk subunits to proton translocation. Part of the complex F(0) domain. Minor subunit located with subunit a/ATP6 in the membrane. Together with subunit g/ATP20, probably contributes to membrane curvature at the site of the ATP synthase dimer, ultimately contributing to formation of cristae. The chain is ATP synthase subunit e, mitochondrial from Yarrowia lipolytica (strain CLIB 122 / E 150) (Yeast).